Reading from the N-terminus, the 417-residue chain is NADH-quinone oxidoreductase subunit D (417 aa).

It belongs to the complex I 49 kDa subunit family. As to quaternary structure, NDH-1 is composed of 14 different subunits. Subunits NuoB, C, D, E, F, and G constitute the peripheral sector of the complex.

It localises to the cell inner membrane. The enzyme catalyses a quinone + NADH + 5 H(+)(in) = a quinol + NAD(+) + 4 H(+)(out). In terms of biological role, NDH-1 shuttles electrons from NADH, via FMN and iron-sulfur (Fe-S) centers, to quinones in the respiratory chain. The immediate electron acceptor for the enzyme in this species is believed to be ubiquinone. Couples the redox reaction to proton translocation (for every two electrons transferred, four hydrogen ions are translocated across the cytoplasmic membrane), and thus conserves the redox energy in a proton gradient. This is NADH-quinone oxidoreductase subunit D from Nitrosospira multiformis (strain ATCC 25196 / NCIMB 11849 / C 71).